The primary structure comprises 735 residues: Photosystem I P700 chlorophyll a apoprotein A2 (735 aa).

Helical transmembrane passes span 46–69 (LFST…FHIA), 135–158 (LYQG…LHLQ), 175–199 (LNHH…HVAI), 273–291 (IAHH…GHMY), 333–356 (LHFQ…QHMY), 372–398 (AALY…IFFI), 420–442 (AIIS…LYVH), and 518–536 (FLVH…LILV). 2 residues coordinate [4Fe-4S] cluster: Cys-560 and Cys-569. A run of 2 helical transmembrane segments spans residues 576 to 597 (AFYL…YWHW) and 644 to 666 (LAVW…MFLI). Residues His-655, Met-663, and Tyr-671 each coordinate chlorophyll a. A phylloquinone-binding site is contributed by Trp-672. Residues 708–728 (VVGLAHFSVGYVLTYAAFLIA) traverse the membrane as a helical segment.

Belongs to the PsaA/PsaB family. In terms of assembly, the PsaA/B heterodimer binds the P700 chlorophyll special pair and subsequent electron acceptors. PSI consists of a core antenna complex that captures photons, and an electron transfer chain that converts photonic excitation into a charge separation. The cyanobacterial PSI reaction center is composed of one copy each of PsaA,B,C,D,E,F,I,J,K,L,M and X, and forms trimeric complexes. Requires PSI electron transfer chain: 5 chlorophyll a, 1 chlorophyll a', 2 phylloquinones and 3 4Fe-4S clusters. PSI core antenna: 90 chlorophyll a, 22 carotenoids, 3 phospholipids and 1 galactolipid. P700 is a chlorophyll a/chlorophyll a' dimer, A0 is one or more chlorophyll a, A1 is one or both phylloquinones and FX is a shared 4Fe-4S iron-sulfur center. as cofactor.

The protein localises to the cellular thylakoid membrane. The catalysed reaction is reduced [plastocyanin] + hnu + oxidized [2Fe-2S]-[ferredoxin] = oxidized [plastocyanin] + reduced [2Fe-2S]-[ferredoxin]. Its function is as follows. PsaA and PsaB bind P700, the primary electron donor of photosystem I (PSI), as well as the electron acceptors A0, A1 and FX. PSI is a plastocyanin/cytochrome c6-ferredoxin oxidoreductase, converting photonic excitation into a charge separation, which transfers an electron from the donor P700 chlorophyll pair to the spectroscopically characterized acceptors A0, A1, FX, FA and FB in turn. Oxidized P700 is reduced on the lumenal side of the thylakoid membrane by plastocyanin or cytochrome c6. This Synechococcus sp. (strain CC9902) protein is Photosystem I P700 chlorophyll a apoprotein A2.